A 735-amino-acid polypeptide reads, in one-letter code: Photosystem I P700 chlorophyll a apoprotein A2 (735 aa).

8 consecutive transmembrane segments (helical) span residues 46-69, 135-158, 175-199, 274-292, 331-354, 370-396, 418-440, and 518-536; these read IFAS…FHVA, LYTG…LHLQ, LNHH…HVAI, IAHH…GHMY, IHFQ…QHMY, AALY…IFFI, AIIS…PYVH, and FLVH…LILV. The [4Fe-4S] cluster site is built by cysteine 560 and cysteine 569. Transmembrane regions (helical) follow at residues 576-597 and 644-666; these read AFYL…YWHW and LSVW…MFLI. Residues histidine 655, methionine 663, and tyrosine 671 each coordinate chlorophyll a. Tryptophan 672 serves as a coordination point for phylloquinone. A helical membrane pass occupies residues 708 to 728; it reads LVGLAHFSVGYIFTYAAFLIA.

It belongs to the PsaA/PsaB family. In terms of assembly, the PsaA/B heterodimer binds the P700 chlorophyll special pair and subsequent electron acceptors. PSI consists of a core antenna complex that captures photons, and an electron transfer chain that converts photonic excitation into a charge separation. The eukaryotic PSI reaction center is composed of at least 11 subunits. The cofactor is P700 is a chlorophyll a/chlorophyll a' dimer, A0 is one or more chlorophyll a, A1 is one or both phylloquinones and FX is a shared 4Fe-4S iron-sulfur center..

The protein localises to the plastid. Its subcellular location is the chloroplast thylakoid membrane. The catalysed reaction is reduced [plastocyanin] + hnu + oxidized [2Fe-2S]-[ferredoxin] = oxidized [plastocyanin] + reduced [2Fe-2S]-[ferredoxin]. In terms of biological role, psaA and PsaB bind P700, the primary electron donor of photosystem I (PSI), as well as the electron acceptors A0, A1 and FX. PSI is a plastocyanin-ferredoxin oxidoreductase, converting photonic excitation into a charge separation, which transfers an electron from the donor P700 chlorophyll pair to the spectroscopically characterized acceptors A0, A1, FX, FA and FB in turn. Oxidized P700 is reduced on the lumenal side of the thylakoid membrane by plastocyanin. This Zea mays (Maize) protein is Photosystem I P700 chlorophyll a apoprotein A2.